The primary structure comprises 475 residues: tRNA (guanine(37)-N(1))-methyltransferase (475 aa).

S-adenosyl-L-methionine contacts are provided by residues H219, D258–L259, and D286–G287. The interval K306 to V328 is disordered. Residue N349 participates in S-adenosyl-L-methionine binding. Polar residues predominate over residues N456 to N469. Residues N456–T475 form a disordered region.

It belongs to the class I-like SAM-binding methyltransferase superfamily. TRM5/TYW2 family. In terms of assembly, monomer.

It localises to the mitochondrion matrix. The protein localises to the nucleus. Its subcellular location is the cytoplasm. The catalysed reaction is guanosine(37) in tRNA + S-adenosyl-L-methionine = N(1)-methylguanosine(37) in tRNA + S-adenosyl-L-homocysteine + H(+). In terms of biological role, specifically methylates the N1 position of guanosine-37 in various cytoplasmic and mitochondrial tRNAs. Methylation is not dependent on the nature of the nucleoside 5' of the target nucleoside. This is the first step in the biosynthesis of wybutosine (yW), a modified base adjacent to the anticodon of tRNAs and required for accurate decoding. This is tRNA (guanine(37)-N(1))-methyltransferase from Batrachochytrium dendrobatidis (strain JAM81 / FGSC 10211) (Frog chytrid fungus).